The sequence spans 350 residues: Isopentenyl-diphosphate delta-isomerase (350 aa).

15–16 (RK) serves as a coordination point for substrate. FMN is bound by residues S73, 74–76 (SMT), S104, and N132. 104 to 106 (SQR) provides a ligand contact to substrate. Q167 lines the substrate pocket. Mg(2+) is bound at residue E168. Residues K199, T229, 279–281 (GLR), and 300–301 (AM) contribute to the FMN site.

This sequence belongs to the IPP isomerase type 2 family. In terms of assembly, homooctamer. Dimer of tetramers. The cofactor is FMN. NADPH is required as a cofactor. Mg(2+) serves as cofactor.

The protein resides in the cytoplasm. It catalyses the reaction isopentenyl diphosphate = dimethylallyl diphosphate. Functionally, involved in the biosynthesis of isoprenoids. Catalyzes the 1,3-allylic rearrangement of the homoallylic substrate isopentenyl (IPP) to its allylic isomer, dimethylallyl diphosphate (DMAPP). The protein is Isopentenyl-diphosphate delta-isomerase of Nostoc sp. (strain PCC 7120 / SAG 25.82 / UTEX 2576).